A 371-amino-acid polypeptide reads, in one-letter code: Diterpene cyclase DtcycA (371 aa).

Positions 234, 238, and 242 each coordinate Mg(2+).

This sequence belongs to the terpene synthase family. Homodimer. Mg(2+) serves as cofactor.

The catalysed reaction is (2E,6E,10E)-geranylgeranyl diphosphate = cembrene C + diphosphate. It catalyses the reaction (2E,6E,10E)-geranylgeranyl diphosphate + H2O = (R)-nephthenol + diphosphate. Its function is as follows. Diterpene cyclases that can form multiple diterpene products. The protein is Diterpene cyclase DtcycA of Streptomyces sp.